The following is a 101-amino-acid chain: Small ribosomal subunit protein uS14 (101 aa).

Belongs to the universal ribosomal protein uS14 family. Part of the 30S ribosomal subunit. Contacts proteins S3 and S10.

Functionally, binds 16S rRNA, required for the assembly of 30S particles and may also be responsible for determining the conformation of the 16S rRNA at the A site. The chain is Small ribosomal subunit protein uS14 from Shewanella woodyi (strain ATCC 51908 / MS32).